Consider the following 410-residue polypeptide: Arginine deiminase (410 aa).

Cysteine 398 acts as the Amidino-cysteine intermediate in catalysis.

This sequence belongs to the arginine deiminase family. As to quaternary structure, homodimer.

It is found in the cytoplasm. The catalysed reaction is L-arginine + H2O = L-citrulline + NH4(+). The protein operates within amino-acid degradation; L-arginine degradation via ADI pathway; carbamoyl phosphate from L-arginine: step 1/2. In Mycoplasmopsis arginini (Mycoplasma arginini), this protein is Arginine deiminase (arcA).